The chain runs to 83 residues: Keratin-associated protein 21-2 (83 aa).

Interacts with hair keratins.

Functionally, in the hair cortex, hair keratin intermediate filaments are embedded in an interfilamentous matrix, consisting of hair keratin-associated proteins (KRTAP), which are essential for the formation of a rigid and resistant hair shaft through their extensive disulfide bond cross-linking with abundant cysteine residues of hair keratins. The matrix proteins include the high-sulfur and high-glycine-tyrosine keratins. The chain is Keratin-associated protein 21-2 (KRTAP21-2) from Homo sapiens (Human).